A 1611-amino-acid chain; its full sequence is Pentafunctional AROM polypeptide (1611 aa).

A 3-dehydroquinate synthase region spans residues 1-391 (MSSSSADVLK…YEEKASVVAD (391 aa)). Residues 47-49 (DTN), 84-87 (EGAK), 115-117 (GGV), and Asp120 each bind NAD(+). A 7-phospho-2-dehydro-3-deoxy-D-arabino-heptonate-binding site is contributed by Arg131. 140–141 (TT) is a binding site for NAD(+). 7-phospho-2-dehydro-3-deoxy-D-arabino-heptonate is bound by residues Asp147 and Lys153. Residue Lys162 participates in NAD(+) binding. Asn163 provides a ligand contact to 7-phospho-2-dehydro-3-deoxy-D-arabino-heptonate. Residues 180–183 (FLTT) and Asn191 each bind NAD(+). Glu195 is a binding site for Zn(2+). Residues 195 to 198 (EVIK) and Lys257 each bind 7-phospho-2-dehydro-3-deoxy-D-arabino-heptonate. Glu267 serves as the catalytic Proton acceptor; for 3-dehydroquinate synthase activity. Residues 271–275 (RNLVN) and His278 each bind 7-phospho-2-dehydro-3-deoxy-D-arabino-heptonate. His278 serves as a coordination point for Zn(2+). His282 acts as the Proton acceptor; for 3-dehydroquinate synthase activity in catalysis. 2 residues coordinate 7-phospho-2-dehydro-3-deoxy-D-arabino-heptonate: His294 and Lys363. A Zn(2+)-binding site is contributed by His294. Positions 404–863 (VKAATPTKSP…WDDLQNKIGV (460 aa)) are EPSP synthase. The active-site For EPSP synthase activity is Cys845. The shikimate kinase stretch occupies residues 892–1093 (DRPIFLIGMR…SVGNPTSFLS (202 aa)). Residue 899–906 (GMRGAGKT) participates in ATP binding. The segment at 1094–1318 (LTFPDVTPAL…AAPGQLTARE (225 aa)) is 3-dehydroquinase. The active-site Proton acceptor; for 3-dehydroquinate dehydratase activity is the His1220. Residue Lys1248 is the Schiff-base intermediate with substrate; for 3-dehydroquinate dehydratase activity of the active site. A shikimate dehydrogenase region spans residues 1331-1611 (AKKFVLFGSP…RKAVLDKYFA (281 aa)).

It in the N-terminal section; belongs to the sugar phosphate cyclases superfamily. Dehydroquinate synthase family. In the 2nd section; belongs to the EPSP synthase family. This sequence in the 3rd section; belongs to the shikimate kinase family. The protein in the 4th section; belongs to the type-I 3-dehydroquinase family. It in the C-terminal section; belongs to the shikimate dehydrogenase family. As to quaternary structure, homodimer. It depends on Zn(2+) as a cofactor.

It localises to the cytoplasm. It carries out the reaction 7-phospho-2-dehydro-3-deoxy-D-arabino-heptonate = 3-dehydroquinate + phosphate. It catalyses the reaction 3-dehydroquinate = 3-dehydroshikimate + H2O. The catalysed reaction is shikimate + NADP(+) = 3-dehydroshikimate + NADPH + H(+). The enzyme catalyses shikimate + ATP = 3-phosphoshikimate + ADP + H(+). It carries out the reaction 3-phosphoshikimate + phosphoenolpyruvate = 5-O-(1-carboxyvinyl)-3-phosphoshikimate + phosphate. It participates in metabolic intermediate biosynthesis; chorismate biosynthesis; chorismate from D-erythrose 4-phosphate and phosphoenolpyruvate: step 2/7. It functions in the pathway metabolic intermediate biosynthesis; chorismate biosynthesis; chorismate from D-erythrose 4-phosphate and phosphoenolpyruvate: step 3/7. Its pathway is metabolic intermediate biosynthesis; chorismate biosynthesis; chorismate from D-erythrose 4-phosphate and phosphoenolpyruvate: step 4/7. The protein operates within metabolic intermediate biosynthesis; chorismate biosynthesis; chorismate from D-erythrose 4-phosphate and phosphoenolpyruvate: step 5/7. It participates in metabolic intermediate biosynthesis; chorismate biosynthesis; chorismate from D-erythrose 4-phosphate and phosphoenolpyruvate: step 6/7. Its function is as follows. The AROM polypeptide catalyzes 5 consecutive enzymatic reactions in prechorismate polyaromatic amino acid biosynthesis. This chain is Pentafunctional AROM polypeptide, found in Cryptococcus neoformans var. neoformans serotype D (strain B-3501A) (Filobasidiella neoformans).